A 677-amino-acid chain; its full sequence is DNA gyrase subunit B, novobiocin-resistant (677 aa).

The tract at residues 1–23 (MTTYDTRTATDTRGSEQPGHVGT) is disordered. Positions 154–295 (IWTDGHRWTQ…RLLSAEIALQ (142 aa)) are novobiocin-binding. One can recognise a Toprim domain in the interval 456–570 (SEIFIVEGDS…EGHVHLSRPP (115 aa)). Mg(2+) contacts are provided by Glu-462, Asp-535, and Asp-537.

The protein belongs to the type II topoisomerase GyrB family. In terms of assembly, heterotetramer, composed of two GyrA and two GyrB chains. In the heterotetramer, GyrA contains the active site tyrosine that forms a transient covalent intermediate with DNA, while GyrB binds cofactors and catalyzes ATP hydrolysis. Requires Mg(2+) as cofactor. Mn(2+) serves as cofactor. Ca(2+) is required as a cofactor.

It is found in the cytoplasm. The catalysed reaction is ATP-dependent breakage, passage and rejoining of double-stranded DNA.. Functionally, a type II topoisomerase that negatively supercoils closed circular double-stranded (ds) DNA in an ATP-dependent manner to modulate DNA topology and maintain chromosomes in an underwound state. Negative supercoiling favors strand separation, and DNA replication, transcription, recombination and repair, all of which involve strand separation. Also able to catalyze the interconversion of other topological isomers of dsDNA rings, including catenanes and knotted rings. Type II topoisomerases break and join 2 DNA strands simultaneously in an ATP-dependent manner. This Streptomyces niveus (Streptomyces spheroides) protein is DNA gyrase subunit B, novobiocin-resistant.